A 179-amino-acid chain; its full sequence is Adenine phosphoribosyltransferase (179 aa).

It belongs to the purine/pyrimidine phosphoribosyltransferase family. Homodimer.

The protein resides in the cytoplasm. The enzyme catalyses AMP + diphosphate = 5-phospho-alpha-D-ribose 1-diphosphate + adenine. It functions in the pathway purine metabolism; AMP biosynthesis via salvage pathway; AMP from adenine: step 1/1. Catalyzes a salvage reaction resulting in the formation of AMP, that is energically less costly than de novo synthesis. The protein is Adenine phosphoribosyltransferase of Helicobacter pylori (strain J99 / ATCC 700824) (Campylobacter pylori J99).